Reading from the N-terminus, the 470-residue chain is Amino-acid permease RocC (470 aa).

12 consecutive transmembrane segments (helical) span residues 18–38 (FMIA…GFTI), 44–64 (LGAI…MLCL), 90–110 (GFMI…LELT), 119–139 (WLPS…IFLI), 159–179 (VAAI…LIDF), 196–216 (GLFP…NFSF), 243–263 (VIWR…AILP), 281–301 (IGIP…ILSV), 338–358 (ALLI…MAAE), 360–380 (VYLW…MSIC), 409–429 (LVPI…IFIP), and 433–453 (IGLY…HLSI).

The protein belongs to the amino acid-polyamine-organocation (APC) superfamily.

It localises to the cell membrane. In terms of biological role, putative transport protein involved in arginine degradative pathway. Probably transports arginine or ornithine. The polypeptide is Amino-acid permease RocC (rocC) (Bacillus subtilis (strain 168)).